The chain runs to 141 residues: Nucleoside diphosphate kinase (141 aa).

K11, F59, R87, T93, R104, and N114 together coordinate ATP. The active-site Pros-phosphohistidine intermediate is the H117.

The protein belongs to the NDK family. Homotetramer. Mg(2+) is required as a cofactor.

Its subcellular location is the cytoplasm. The catalysed reaction is a 2'-deoxyribonucleoside 5'-diphosphate + ATP = a 2'-deoxyribonucleoside 5'-triphosphate + ADP. It carries out the reaction a ribonucleoside 5'-diphosphate + ATP = a ribonucleoside 5'-triphosphate + ADP. Its function is as follows. Major role in the synthesis of nucleoside triphosphates other than ATP. The ATP gamma phosphate is transferred to the NDP beta phosphate via a ping-pong mechanism, using a phosphorylated active-site intermediate. The protein is Nucleoside diphosphate kinase of Polaromonas naphthalenivorans (strain CJ2).